Here is a 271-residue protein sequence, read N- to C-terminus: ATP synthase subunit a (271 aa).

5 consecutive transmembrane segments (helical) span residues 40–60, 100–120, 146–166, 220–240, and 242–262; these read TINIDSMFFSVVLGLLFLVLF, LIAPLALTIFVWVFLMNLMDL, DVNVTLSMALGVFILILFYSI, LIFILIAGLLPWWSQWILNVP, and AIFHILIITLQAFIFMVLTIV.

This sequence belongs to the ATPase A chain family. As to quaternary structure, F-type ATPases have 2 components, CF(1) - the catalytic core - and CF(0) - the membrane proton channel. CF(1) has five subunits: alpha(3), beta(3), gamma(1), delta(1), epsilon(1). CF(0) has three main subunits: a(1), b(2) and c(9-12). The alpha and beta chains form an alternating ring which encloses part of the gamma chain. CF(1) is attached to CF(0) by a central stalk formed by the gamma and epsilon chains, while a peripheral stalk is formed by the delta and b chains.

It is found in the cell inner membrane. Key component of the proton channel; it plays a direct role in the translocation of protons across the membrane. This is ATP synthase subunit a from Escherichia coli O1:K1 / APEC.